Reading from the N-terminus, the 285-residue chain is Putative sugar uptake protein lin0444 (285 aa).

9 consecutive transmembrane segments (helical) span residues 2-21 (SIYL…PIIA), 31-50 (QLLG…FWIL), 55-77 (TVLS…LLQF), 111-133 (WQTV…GVVM), 146-168 (SVSF…YVVT), 172-194 (FDVT…AIGI), 207-229 (VTFN…LATA), 233-255 (VATS…ILIF), and 262-284 (LEWT…LSLL).

The protein belongs to the GRP transporter (TC 2.A.7.5) family.

The protein localises to the cell membrane. In Listeria innocua serovar 6a (strain ATCC BAA-680 / CLIP 11262), this protein is Putative sugar uptake protein lin0444.